The primary structure comprises 94 residues: UPF0337 protein NE2439 (94 aa).

The interval 74 to 94 is disordered; the sequence is KNVGEAVSSRQKSVKKRSLYT. Positions 85-94 are enriched in basic residues; it reads KSVKKRSLYT.

It belongs to the UPF0337 (CsbD) family.

The protein is UPF0337 protein NE2439 of Nitrosomonas europaea (strain ATCC 19718 / CIP 103999 / KCTC 2705 / NBRC 14298).